Consider the following 318-residue polypeptide: Nisin-resistance protein (318 aa).

A helical membrane pass occupies residues 7–28; sequence ILLGLVAVCALFLGIIYLWGYK.

Its subcellular location is the cell membrane. This chain is Nisin-resistance protein (nsr), found in Lactococcus lactis subsp. lactis (Streptococcus lactis).